The following is a 199-amino-acid chain: Chaperone protein TorD (199 aa).

Belongs to the TorD/DmsD family. TorD subfamily.

Its subcellular location is the cytoplasm. Involved in the biogenesis of TorA. Acts on TorA before the insertion of the molybdenum cofactor and, as a result, probably favors a conformation of the apoenzyme that is competent for acquiring the cofactor. The polypeptide is Chaperone protein TorD (Escherichia coli O7:K1 (strain IAI39 / ExPEC)).